The chain runs to 404 residues: Glycosylated lysosomal membrane protein B (404 aa).

An N-terminal signal peptide occupies residues 1 to 24 (MSCTRGWRLILLGLLCVGLLGTRG). Residues 25-364 (QDESRKVSVQ…YGDPPRDSFS (340 aa)) lie on the Lumenal side of the membrane. N-linked (GlcNAc...) asparagine glycans are attached at residues N85, N124, N128, N142, N152, N156, N163, N168, N178, N189, N205, N221, N266, N303, and N330. A helical membrane pass occupies residues 365-385 (ILVICIMAVALGTPLLLLIIG). At 386-404 (TVLVTAVRHKVYPNYQPIN) the chain is on the cytoplasmic side. The Lysosomal targeting motif motif lies at 400–404 (YQPIN).

It belongs to the GLMP family. In terms of assembly, interacts (via lumenal domain) with lysosomal protein MFSD1; the interaction starts while both proteins are still in the endoplasmic reticulum and is required for stabilization of MFSD1 in lysosomes but has no direct effect on its targeting to lysosomes or transporter activity.

It is found in the lysosome membrane. Functionally, required to protect lysosomal transporter MFSD1 from lysosomal proteolysis and for MFSD1 lysosomal localization. This chain is Glycosylated lysosomal membrane protein B (glmp-b), found in Xenopus laevis (African clawed frog).